We begin with the raw amino-acid sequence, 331 residues long: Homoserine kinase (331 aa).

This sequence belongs to the pseudomonas-type ThrB family.

The enzyme catalyses L-homoserine + ATP = O-phospho-L-homoserine + ADP + H(+). Its pathway is amino-acid biosynthesis; L-threonine biosynthesis; L-threonine from L-aspartate: step 4/5. The chain is Homoserine kinase from Cupriavidus necator (strain ATCC 17699 / DSM 428 / KCTC 22496 / NCIMB 10442 / H16 / Stanier 337) (Ralstonia eutropha).